A 103-amino-acid polypeptide reads, in one-letter code: Co-chaperonin GroES (103 aa).

This sequence belongs to the GroES chaperonin family. Heptamer of 7 subunits arranged in a ring. Interacts with the chaperonin GroEL.

It localises to the cytoplasm. In terms of biological role, together with the chaperonin GroEL, plays an essential role in assisting protein folding. The GroEL-GroES system forms a nano-cage that allows encapsulation of the non-native substrate proteins and provides a physical environment optimized to promote and accelerate protein folding. GroES binds to the apical surface of the GroEL ring, thereby capping the opening of the GroEL channel. The polypeptide is Co-chaperonin GroES (Prochlorococcus marinus (strain SARG / CCMP1375 / SS120)).